A 433-amino-acid chain; its full sequence is Trigger factor (433 aa).

In terms of domain architecture, PPIase FKBP-type spans 161–246; sequence EDRVVIDFVG…LKKVENIVLP (86 aa).

Belongs to the FKBP-type PPIase family. Tig subfamily.

It is found in the cytoplasm. It catalyses the reaction [protein]-peptidylproline (omega=180) = [protein]-peptidylproline (omega=0). Functionally, involved in protein export. Acts as a chaperone by maintaining the newly synthesized protein in an open conformation. Functions as a peptidyl-prolyl cis-trans isomerase. The protein is Trigger factor of Actinobacillus pleuropneumoniae serotype 7 (strain AP76).